A 241-amino-acid polypeptide reads, in one-letter code: Keratin-associated protein 5-5 (241 aa).

A run of 15 repeats spans residues 35–38 (CCKP), 41–44 (CCKP), 47–50 (CCVP), 105–108 (CCKP), 115–118 (CCKP), 133–136 (CCKP), 143–146 (CCKP), 161–164 (CCKP), 171–174 (CCKP), 181–184 (CCKP), 191–194 (CCKP), 201–204 (CCKP), 211–214 (CCKP), 221–224 (CCKP), and 231–234 (CCAP). The 15 X 4 AA repeats of C-C-X-P stretch occupies residues 35 to 234 (CCKPVCCCKP…CCCQSSCCAP (200 aa)).

This sequence belongs to the KRTAP type 5 family. Interacts with hair keratins.

In the hair cortex, hair keratin intermediate filaments are embedded in an interfilamentous matrix, consisting of hair keratin-associated protein (KRTAP), which are essential for the formation of a rigid and resistant hair shaft through their extensive disulfide bond cross-linking with abundant cysteine residues of hair keratins. The matrix proteins include the high-sulfur and high-glycine-tyrosine keratins. In Mus musculus (Mouse), this protein is Keratin-associated protein 5-5.